A 91-amino-acid chain; its full sequence is Small ribosomal subunit protein uS19 (91 aa).

Belongs to the universal ribosomal protein uS19 family.

Protein S19 forms a complex with S13 that binds strongly to the 16S ribosomal RNA. In Lactiplantibacillus plantarum (strain ATCC BAA-793 / NCIMB 8826 / WCFS1) (Lactobacillus plantarum), this protein is Small ribosomal subunit protein uS19.